A 214-amino-acid polypeptide reads, in one-letter code: MKLYQKFPETQVLTTQGVIDFYKDIFGKGKWLFLFAHPADFTPVCTTEFVEFSKAYNDFANLGVQLVGLSVDSVYSHIEWLKDIQEKYGIKVPFPVIADPDKKFARLLDIVDEASGQTIRGVFLVSPDGVIRFIAYYPLEAGRKISELLRITKAMIVNYKAKVVLPANWEPGQDVIVPPPNVFDEATMRMKMPKAKSWYLLFKDYNELPQDQKV.

Residues 1-157 form the Thioredoxin domain; that stretch reads MKLYQKFPET…LLRITKAMIV (157 aa). The active-site Cysteine sulfenic acid (-SOH) intermediate is Cys-45. Arg-120 contributes to the substrate binding site.

Belongs to the peroxiredoxin family. Prx6 subfamily. In terms of assembly, homodecamer. Pentamer of dimers that assemble into a ring structure.

The protein localises to the cytoplasm. It carries out the reaction a hydroperoxide + [thioredoxin]-dithiol = an alcohol + [thioredoxin]-disulfide + H2O. Functionally, thiol-specific peroxidase that catalyzes the reduction of hydrogen peroxide and organic hydroperoxides to water and alcohols, respectively. Plays a role in cell protection against oxidative stress by detoxifying peroxides. This chain is Peroxiredoxin 2, found in Sulfuracidifex metallicus (Sulfolobus metallicus).